Consider the following 371-residue polypeptide: MNQMKDTILLAGLGLIGGSIALAIKKNHPGKRIIGIDISDEQAVAALKLGVIDDRADSFISGVKEAATVIIATPVEQTLVMLEELAHSGIEHELLITDVGSTKQKVVDYADQVLPSRYQFVGGHPMAGSHKSGVAAAKEFLFENAFYILTPGQKTDKQAVEQLKNLLKGTNAHFVEMSPEEHDGVTSVISHFPHIVAASLVHQTHHSENLYPLVKRFAAGGFRDITRIASSSPAMWRDILLHNKDKILDRFDEWIREIDKIRTYVEQEDAENLFRYFKTAKDYRDGLPLRQKGAIPAFYDLYVDVPDHPGVISEITAILAAERISITNIRIIETREDINGILRISFQSDDDRKRAEQCIEARAEYETFYAD.

A Prephenate/arogenate dehydrogenase domain is found at 6–295 (DTILLAGLGL…GLPLRQKGAI (290 aa)). Position 7-37 (7-37 (TILLAGLGLIGGSIALAIKKNHPGKRIIGID)) interacts with NAD(+). The region spanning 300-371 (DLYVDVPDHP…RAEYETFYAD (72 aa)) is the ACT domain.

Belongs to the prephenate/arogenate dehydrogenase family.

It carries out the reaction prephenate + NAD(+) = 3-(4-hydroxyphenyl)pyruvate + CO2 + NADH. It functions in the pathway amino-acid biosynthesis; L-tyrosine biosynthesis; (4-hydroxyphenyl)pyruvate from prephenate (NAD(+) route): step 1/1. In Bacillus subtilis (strain 168), this protein is Prephenate dehydrogenase (tyrA).